Reading from the N-terminus, the 196-residue chain is Probable DNA-directed RNA polymerase subunit delta (196 aa).

The HTH HARE-type domain occupies 14–81 (LSMIEVAHEI…GDNVWGLRSW (68 aa)). The span at 119–150 (DDDDVIDYDDDDPEDEDLDNDYDDEDDDDDEG) shows a compositional bias: acidic residues. The interval 119–196 (DDDDVIDYDD…DADLDEENQD (78 aa)) is disordered. A compositionally biased stretch (basic and acidic residues) spans 151–161 (SHELKQYTKDL). Acidic residues-rich tracts occupy residues 162–176 (DDID…ELAD) and 186–196 (SDADLDEENQD).

Belongs to the RpoE family. As to quaternary structure, RNAP is composed of a core of 2 alpha, a beta and a beta' subunits. The core is associated with a delta subunit and one of several sigma factors.

Participates in both the initiation and recycling phases of transcription. In the presence of the delta subunit, RNAP displays an increased specificity of transcription, a decreased affinity for nucleic acids, and an increased efficiency of RNA synthesis because of enhanced recycling. This Ligilactobacillus salivarius (strain UCC118) (Lactobacillus salivarius) protein is Probable DNA-directed RNA polymerase subunit delta.